The chain runs to 210 residues: 3-oxo-tetronate 4-phosphate decarboxylase (210 aa).

Glu74 acts as the Proton acceptor in catalysis. Zn(2+) contacts are provided by Glu74, His93, and His95. Catalysis depends on Tyr120, which acts as the Proton donor. His160 is a Zn(2+) binding site.

This sequence belongs to the aldolase class II family. AraD/FucA subfamily. It depends on Zn(2+) as a cofactor.

The catalysed reaction is 3-dehydro-4-O-phospho-D-erythronate + H(+) = dihydroxyacetone phosphate + CO2. It carries out the reaction 3-dehydro-4-O-phospho-L-erythronate + H(+) = dihydroxyacetone phosphate + CO2. Functionally, catalyzes the decarboxylation of 3-oxo-tetronate 4-phosphate to dihydroxyacetone phosphate (DHAP) and CO(2). The protein is 3-oxo-tetronate 4-phosphate decarboxylase of Haemophilus influenzae (strain ATCC 51907 / DSM 11121 / KW20 / Rd).